The chain runs to 417 residues: Serine hydroxymethyltransferase (417 aa).

Residues Leu121 and 125 to 127 each bind (6S)-5,6,7,8-tetrahydrofolate; that span reads GHL. Lys229 carries the N6-(pyridoxal phosphate)lysine modification. Position 355 to 357 (355 to 357) interacts with (6S)-5,6,7,8-tetrahydrofolate; it reads SPF.

It belongs to the SHMT family. Homodimer. Pyridoxal 5'-phosphate is required as a cofactor.

It localises to the cytoplasm. The enzyme catalyses (6R)-5,10-methylene-5,6,7,8-tetrahydrofolate + glycine + H2O = (6S)-5,6,7,8-tetrahydrofolate + L-serine. It participates in one-carbon metabolism; tetrahydrofolate interconversion. It functions in the pathway amino-acid biosynthesis; glycine biosynthesis; glycine from L-serine: step 1/1. Catalyzes the reversible interconversion of serine and glycine with tetrahydrofolate (THF) serving as the one-carbon carrier. This reaction serves as the major source of one-carbon groups required for the biosynthesis of purines, thymidylate, methionine, and other important biomolecules. Also exhibits THF-independent aldolase activity toward beta-hydroxyamino acids, producing glycine and aldehydes, via a retro-aldol mechanism. In Xylella fastidiosa (strain 9a5c), this protein is Serine hydroxymethyltransferase.